A 1338-amino-acid polypeptide reads, in one-letter code: Fanconi anemia group I protein (1338 aa).

Residue Lys-525 forms a Glycyl lysine isopeptide (Lys-Gly) (interchain with G-Cter in ubiquitin) linkage. A phosphoserine mark is found at Ser-558 and Ser-561. Position 567 is a phosphothreonine (Thr-567).

This sequence belongs to the Fanconi anemia group I protein family. In terms of assembly, homodimer. Part of a FANCI-FANCD2 heterodimeric complex that binds and scans dsDNA for DNA damage. Interacts with FANCL. Interacts with MTMR15/FAN1. Interacts with POLN. Interacts with UBL5; the interaction promotes FANCI homodimerization. Monoubiquitinated by FANCL during S phase and upon genotoxic stress. Deubiquitinated by USP1 as cells enter G2/M, or once DNA repair is completed. Monoubiquitination requires the FANCA-FANCB-FANCC-FANCE-FANCF-FANCG-FANCM complex. Ubiquitination is required for binding to chromatin, DNA repair, and normal cell cycle progression. Monoubiquitination is stimulated by DNA-binding. In terms of processing, phosphorylated in response to DNA damage by ATM and/or ATR. Phosphorylation of FANCI promotes ubiquitination of FANCD2, which prevents DNA release from the FANCI-FANCD2 complex.

Plays an essential role in the repair of DNA double-strand breaks by homologous recombination and in the repair of interstrand DNA cross-links (ICLs) by promoting FANCD2 monoubiquitination by FANCL and participating in recruitment to DNA repair sites. The FANCI-FANCD2 complex binds and scans double-stranded DNA (dsDNA) for DNA damage; this complex stalls at DNA junctions between double-stranded DNA and single-stranded DNA. Participates in S phase and G2 phase checkpoint activation upon DNA damage. This is Fanconi anemia group I protein from Gallus gallus (Chicken).